A 139-amino-acid chain; its full sequence is Putative nickel-responsive regulator (139 aa).

Positions 79, 90, 92, and 98 each coordinate Ni(2+).

This sequence belongs to the transcriptional regulatory CopG/NikR family. Ni(2+) is required as a cofactor.

Its function is as follows. Transcriptional regulator. This Anaeromyxobacter dehalogenans (strain 2CP-1 / ATCC BAA-258) protein is Putative nickel-responsive regulator.